The following is a 428-amino-acid chain: Beta-1,3-galactosyl-O-glycosyl-glycoprotein beta-1,6-N-acetylglucosaminyltransferase (428 aa).

Over 1–9 (MLRTLLRRR) the chain is Cytoplasmic. The interval 5–9 (LLRRR) is mediates interaction with GOLPH3 and is necessary and sufficient for localization to the Golgi. A helical; Signal-anchor for type II membrane protein membrane pass occupies residues 10 to 32 (LFSYPTKYYFMVLVLSLITFSVL). The interval 33 to 121 (RIHQKPEFVS…EPLSKEEAEF (89 aa)) is stem region. The Lumenal portion of the chain corresponds to 33–428 (RIHQKPEFVS…RHKALETLKH (396 aa)). N-linked (GlcNAc...) asparagine glycosylation is found at Asn-58 and Asn-95. Cystine bridges form between Cys-59–Cys-413, Cys-100–Cys-172, Cys-151–Cys-199, and Cys-372–Cys-381. A catalytic region spans residues 122–428 (PIAYSIVVHH…RHKALETLKH (307 aa)). UDP-N-acetyl-alpha-D-glucosamine is bound by residues 128 to 130 (VVH), 155 to 157 (DTK), and Tyr-187. Residues Glu-243, Lys-251, Arg-254, Glu-320, Lys-341, and Tyr-358 each coordinate a glycoprotein. Glu-320 serves as the catalytic Nucleophile. UDP-N-acetyl-alpha-D-glucosamine is bound by residues Arg-378 and Lys-401.

Belongs to the glycosyltransferase 14 family. In terms of assembly, interacts with GOLPH3; may control GCNT1 retention in the Golgi. Highly expressed in activated T-lymphocytes and myeloid cells.

Its subcellular location is the golgi apparatus membrane. It carries out the reaction a 3-O-[beta-D-galactosyl-(1-&gt;3)-N-acetyl-alpha-D-galactosaminyl]-L-seryl-[protein] + UDP-N-acetyl-alpha-D-glucosamine = 3-O-{beta-D-galactosyl-(1-&gt;3)-[N-acetyl-beta-D-glucosaminyl-(1-&gt;6)]-N-acetyl-alpha-D-galactosaminyl}-L-seryl-[protein] + UDP + H(+). The catalysed reaction is a 3-O-[beta-D-galactosyl-(1-&gt;3)-N-acetyl-alpha-D-galactosaminyl]-L-threonyl-[protein] + UDP-N-acetyl-alpha-D-glucosamine = a 3-O-{beta-D-galactosyl-(1-&gt;3)-[N-acetyl-beta-D-glucosaminyl-(1-&gt;6)]-N-acetyl-alpha-D-galactosaminyl}-L-threonyl-[protein] + UDP + H(+). It catalyses the reaction a globoside GalGb4Cer + UDP-N-acetyl-alpha-D-glucosamine = a globoside GlcNAc-(beta1-&gt;6)-GalGb4Cer + UDP + H(+). The enzyme catalyses a ganglioside GA1 + UDP-N-acetyl-alpha-D-glucosamine = a ganglioside beta-D-GlcNAc-(1-&gt;6)-GA1 + UDP + H(+). It functions in the pathway protein modification; protein glycosylation. Its pathway is glycolipid biosynthesis. In terms of biological role, glycosyltransferase that catalyzes the transfer of an N-acetylglucosamine (GlcNAc) moiety in beta1-6 linkage from UDP-GlcNAc onto mucin-type core 1 O-glycan to form the branched mucin-type core 2 O-glycan. The catalysis is metal ion-independent and occurs with inversion of the anomeric configuration of sugar donor. Selectively involved in synthesis of mucin-type core 2 O-glycans that serve as scaffolds for the display of selectin ligand sialyl Lewis X epitope by myeloid cells, with an impact on homeostasis and recruitment to inflammatory sites. Can also act on glycolipid substrates. Transfers GlcNAc moiety to GalGb4Cer globosides in a reaction step to the synthesis of stage-specific embryonic antigen 1 (SSEA-1) determinant. Can use Galbeta1-3GalNAcalpha1- and Galbeta1-3GalNAcbeta1- oligosaccharide derivatives as acceptor substrates. This chain is Beta-1,3-galactosyl-O-glycosyl-glycoprotein beta-1,6-N-acetylglucosaminyltransferase (GCNT1), found in Homo sapiens (Human).